Here is a 110-residue protein sequence, read N- to C-terminus: Thiosulfate sulfurtransferase GlpE (110 aa).

Positions R17–S105 constitute a Rhodanese domain. The active-site Cysteine persulfide intermediate is the C65.

Belongs to the GlpE family.

It localises to the cytoplasm. It catalyses the reaction thiosulfate + hydrogen cyanide = thiocyanate + sulfite + 2 H(+). The catalysed reaction is thiosulfate + [thioredoxin]-dithiol = [thioredoxin]-disulfide + hydrogen sulfide + sulfite + 2 H(+). In terms of biological role, transferase that catalyzes the transfer of sulfur from thiosulfate to thiophilic acceptors such as cyanide or dithiols. May function in a CysM-independent thiosulfate assimilation pathway by catalyzing the conversion of thiosulfate to sulfite, which can then be used for L-cysteine biosynthesis. This chain is Thiosulfate sulfurtransferase GlpE, found in Pseudomonas aeruginosa (strain LESB58).